A 94-amino-acid polypeptide reads, in one-letter code: Integration host factor subunit beta (94 aa).

It belongs to the bacterial histone-like protein family. Heterodimer of an alpha and a beta chain.

In terms of biological role, this protein is one of the two subunits of integration host factor, a specific DNA-binding protein that functions in genetic recombination as well as in transcriptional and translational control. This is Integration host factor subunit beta from Dechloromonas aromatica (strain RCB).